Consider the following 203-residue polypeptide: MSTFITFEGPEGAGKTSVIKKVSERLAKEYDIVTTREPGGVLTSEEIRRIVLDGDSIDIRTEAMLFAASRREHLVEKIIPSLQAGKIVLCDRYIDSSLAYQGYARGIGIKEVKLLNEFAINGLYPDLTIYLDVDAEIGRQRILKNNREQNRLDKEEKAFHEKVIEGYQKVISDNPHRFIKVNANHSLDKVVEETYQSIIKYLK.

Position 9–16 (9–16) interacts with ATP; the sequence is GPEGAGKT.

This sequence belongs to the thymidylate kinase family.

It catalyses the reaction dTMP + ATP = dTDP + ADP. Phosphorylation of dTMP to form dTDP in both de novo and salvage pathways of dTTP synthesis. This is Thymidylate kinase from Staphylococcus epidermidis (strain ATCC 35984 / DSM 28319 / BCRC 17069 / CCUG 31568 / BM 3577 / RP62A).